We begin with the raw amino-acid sequence, 235 residues long: MAVHTNRQILTRGKNYATKQSKKFGTDEVTFDKDSRLDYLTGFHKRKLQRQKKAQEFIKEQERLRKIEERQKIRQERKEVMEEQLKTFKESLNLEAEIEDAKNDKTEDLQVESDESWHGFDSDKDDGDNDNNESSVKPILKKGAITEIYDDSTTVELETLEPNDNFEYLAQLNNVKLEKAEKVLKQSINRATKYAKFLGVDEKQKKKPRVKKFRYLTKNERRINQRKANDNKRRR.

Residues 49–110 (QRQKKAQEFI…AKNDKTEDLQ (62 aa)) adopt a coiled-coil conformation. A compositionally biased stretch (basic and acidic residues) spans 99–108 (EDAKNDKTED). 2 disordered regions span residues 99-138 (EDAK…SVKP) and 209-235 (RVKK…KRRR). Residues S113, S116, and S122 each carry the phosphoserine modification. A compositionally biased stretch (basic and acidic residues) spans 217-235 (TKNERRINQRKANDNKRRR).

Belongs to the RRP17 family.

The protein localises to the nucleus. It is found in the nucleolus. Essential protein involved in ribosomal RNA processing. This chain is Ribosomal RNA-processing protein 17 (RRP17), found in Saccharomyces cerevisiae (strain ATCC 204508 / S288c) (Baker's yeast).